A 152-amino-acid polypeptide reads, in one-letter code: Protein SprT-like (152 aa).

A SprT-like domain is found at 7–148 (QRLVEEVSLQ…GKCKGKLILI (142 aa)). Position 67 (histidine 67) interacts with Zn(2+). The active site involves glutamate 68. Histidine 71 serves as a coordination point for Zn(2+).

This sequence belongs to the SprT family. Requires Zn(2+) as cofactor.

The protein resides in the cytoplasm. The polypeptide is Protein SprT-like (Bacillus thuringiensis subsp. konkukian (strain 97-27)).